A 150-amino-acid polypeptide reads, in one-letter code: MTIADNKKAFFDYFIEERYEAGIVLEGWEVKAIRAGRVQIKEGYVVVRDAEMFLIGAHISPLQSASTHVNPDPVRTRKLLLKADEIKKLIGKVEQRGYTLVPLNLHYTRGRVKCEIGLAKGKKQFDKRETEKQRDWQREKARIMKGDAKD.

Residues 127–150 form a disordered region; it reads KRETEKQRDWQREKARIMKGDAKD.

Belongs to the SmpB family.

The protein localises to the cytoplasm. Its function is as follows. Required for rescue of stalled ribosomes mediated by trans-translation. Binds to transfer-messenger RNA (tmRNA), required for stable association of tmRNA with ribosomes. tmRNA and SmpB together mimic tRNA shape, replacing the anticodon stem-loop with SmpB. tmRNA is encoded by the ssrA gene; the 2 termini fold to resemble tRNA(Ala) and it encodes a 'tag peptide', a short internal open reading frame. During trans-translation Ala-aminoacylated tmRNA acts like a tRNA, entering the A-site of stalled ribosomes, displacing the stalled mRNA. The ribosome then switches to translate the ORF on the tmRNA; the nascent peptide is terminated with the 'tag peptide' encoded by the tmRNA and targeted for degradation. The ribosome is freed to recommence translation, which seems to be the essential function of trans-translation. This Cupriavidus necator (strain ATCC 17699 / DSM 428 / KCTC 22496 / NCIMB 10442 / H16 / Stanier 337) (Ralstonia eutropha) protein is SsrA-binding protein.